We begin with the raw amino-acid sequence, 710 residues long: Polyribonucleotide nucleotidyltransferase (710 aa).

Mg(2+) contacts are provided by aspartate 486 and aspartate 492. The 60-residue stretch at 553–612 folds into the KH domain; the sequence is PRFETIKIHPDKIRDIIGKGGATIRSITEETNSSIDIDDDGTVKVYADDNEALQAALNRI. Residues 622–690 form the S1 motif domain; sequence GAIYEGTVVR…QRGRIKLSIK (69 aa).

This sequence belongs to the polyribonucleotide nucleotidyltransferase family. Component of the RNA degradosome, which is a multiprotein complex involved in RNA processing and mRNA degradation. Mg(2+) serves as cofactor.

Its subcellular location is the cytoplasm. The enzyme catalyses RNA(n+1) + phosphate = RNA(n) + a ribonucleoside 5'-diphosphate. In terms of biological role, involved in mRNA degradation. Catalyzes the phosphorolysis of single-stranded polyribonucleotides processively in the 3'- to 5'-direction. In Cellvibrio japonicus (strain Ueda107) (Pseudomonas fluorescens subsp. cellulosa), this protein is Polyribonucleotide nucleotidyltransferase.